A 103-amino-acid polypeptide reads, in one-letter code: Putative inactive recombination-promoting nuclease-like protein YjiP (103 aa).

The protein belongs to the Rpn/YhgA-like nuclease family.

Its function is as follows. This pseudogene is the N-terminal fragment of low activity DNA endonuclease RpnD which probably yields 3'-hydroxyl ends. The intact protein can be seen in this entry (AC B7NGZ6). Expression of the repaired protein increases the frequency of recA-independent recombination, but also decreases viability probably via DNA damage; in a RecA strain expression has no effect on viability but does induce the SOS repair response. May play a role in horizontal gene transfer. This chain is Putative inactive recombination-promoting nuclease-like protein YjiP (yjiP), found in Escherichia coli (strain K12).